Here is a 132-residue protein sequence, read N- to C-terminus: Small ribosomal subunit protein uS11 (132 aa).

Belongs to the universal ribosomal protein uS11 family. As to quaternary structure, part of the 30S ribosomal subunit.

In terms of biological role, located on the platform of the 30S subunit. The protein is Small ribosomal subunit protein uS11 of Sulfurisphaera tokodaii (strain DSM 16993 / JCM 10545 / NBRC 100140 / 7) (Sulfolobus tokodaii).